Reading from the N-terminus, the 441-residue chain is Interferon-related developmental regulator 2 (441 aa).

A compositionally biased stretch (basic residues) spans 1 to 15 (MPRARKGNTPRKGGQ). Positions 1 to 72 (MPRARKGNTP…TVDEQGPQED (72 aa)) are disordered. Positions 63 to 72 (TVDEQGPQED) are enriched in acidic residues.

It belongs to the IFRD family. Associates with ribosomes; promoting ribosome inactivation.

Functionally, ribosome-binding protein that acts as an inhibitor of mRNA translation by promoting ribosome inactivation. Associates with the P- and E-sites of the ribosome and inserts a C-terminal helix into the mRNA exit channel to preclude translation. This is Interferon-related developmental regulator 2 from Oryctolagus cuniculus (Rabbit).